The primary structure comprises 62 residues: Large ribosomal subunit protein bL28 (62 aa).

Residues 1–28 are disordered; that stretch reads MARKCVITGRKSRSGNSRSHAMNASKRT. A compositionally biased stretch (polar residues) spans 14 to 26; sequence SGNSRSHAMNASK.

Belongs to the bacterial ribosomal protein bL28 family.

The sequence is that of Large ribosomal subunit protein bL28 from Bacillus licheniformis (strain ATCC 14580 / DSM 13 / JCM 2505 / CCUG 7422 / NBRC 12200 / NCIMB 9375 / NCTC 10341 / NRRL NRS-1264 / Gibson 46).